The following is a 625-amino-acid chain: BTB/POZ domain-containing protein At5g48130 (625 aa).

Residues 41 to 105 (ASVHVRVCNK…IYGCPTLIHP (65 aa)) form the BTB domain. The NPH3 domain occupies 217 to 469 (DTWIKDLTDL…VQALFIQQLN (253 aa)). A compositionally biased stretch (polar residues) spans 494 to 507 (VPSSRPLTSQQSPC). The tract at residues 494–513 (VPSSRPLTSQQSPCTDDETG) is disordered.

It belongs to the NPH3 family.

The protein operates within protein modification; protein ubiquitination. May act as a substrate-specific adapter of an E3 ubiquitin-protein ligase complex (CUL3-RBX1-BTB) which mediates the ubiquitination and subsequent proteasomal degradation of target proteins. The sequence is that of BTB/POZ domain-containing protein At5g48130 from Arabidopsis thaliana (Mouse-ear cress).